The chain runs to 282 residues: Phosphate import ATP-binding protein PstB (282 aa).

Residues Met-1–Arg-33 are disordered. Positions Ile-36–Ile-277 constitute an ABC transporter domain. Gly-68–Ser-75 provides a ligand contact to ATP.

This sequence belongs to the ABC transporter superfamily. Phosphate importer (TC 3.A.1.7) family. As to quaternary structure, the complex is composed of two ATP-binding proteins (PstB), two transmembrane proteins (PstC and PstA) and a solute-binding protein (PstS).

The protein resides in the cell inner membrane. It catalyses the reaction phosphate(out) + ATP + H2O = ADP + 2 phosphate(in) + H(+). Its function is as follows. Part of the ABC transporter complex PstSACB involved in phosphate import. Responsible for energy coupling to the transport system. This Paraburkholderia xenovorans (strain LB400) protein is Phosphate import ATP-binding protein PstB.